The chain runs to 454 residues: Exopolyphosphatase PRUNE1 (454 aa).

N-acetylmethionine is present on Met-1. Positions 28, 30, 106, and 179 each coordinate Mn(2+). The DHH motif signature appears at 106 to 108 (DHH). The segment at 394 to 421 (SLISGLSQDEEDPPLPPTPMNSLVDECP) is essential for homodimerization. The tract at residues 397 to 420 (SGLSQDEEDPPLPPTPMNSLVDEC) is disordered. At Ser-400 the chain carries Phosphoserine. Thr-411 carries the post-translational modification Phosphothreonine. Ser-415 carries the phosphoserine modification.

It belongs to the PPase class C family. Prune subfamily. In terms of assembly, homooligomer. Able to homodimerize via its C-terminal domain. Interacts with NME1. Interacts with GSK3; at focal adhesion complexes where paxillin and vinculin are colocalized. Interacts with alpha and beta tubulin. Mn(2+) serves as cofactor.

It localises to the cytoplasm. The protein resides in the nucleus. Its subcellular location is the cell junction. The protein localises to the focal adhesion. It carries out the reaction diphosphate + H2O = 2 phosphate + H(+). Its activity is regulated as follows. Activated by magnesium ions and inhibited by manganese ions. Inhibited by dipyridamole, moderately sensitive to IBMX and inhibited by vinpocetine. Its function is as follows. Phosphodiesterase (PDE) that has higher activity toward cAMP than cGMP, as substrate. Plays a role in cell proliferation, migration and differentiation, and acts as a negative regulator of NME1. Plays a role in the regulation of neurogenesis. Involved in the regulation of microtubule polymerization. In Mus musculus (Mouse), this protein is Exopolyphosphatase PRUNE1 (Prune1).